A 180-amino-acid chain; its full sequence is ADP-ribosylation factor-like protein 1 (180 aa).

A lipid anchor (N-myristoyl glycine) is attached at Gly-2. Residues 23-30, 66-70, and 125-128 contribute to the GTP site; these read GLDGAGKT, DLGGQ, and NKQD.

This sequence belongs to the small GTPase superfamily. Arf family. As to expression, expressed in neuronal cells. Expression in hypodermal tissues is absent.

Its subcellular location is the golgi apparatus. The protein resides in the cytoplasm. The protein localises to the cytoplasmic granule. Functionally, GTP-binding protein that may be involved in protein trafficking; may modulate vesicle budding and uncoating within the Golgi apparatus. Plays a role in male tail tip morphogenesis. The sequence is that of ADP-ribosylation factor-like protein 1 from Caenorhabditis elegans.